The sequence spans 262 residues: Virulence plasmid protein pGP6-D-related protein (262 aa).

It belongs to the UPF0137 (pGP6-D) family.

In Chlamydia muridarum (strain MoPn / Nigg), this protein is Virulence plasmid protein pGP6-D-related protein.